Reading from the N-terminus, the 1358-residue chain is Phosphoinositide 3-kinase regulatory subunit 4 (1358 aa).

Gly-2 carries the N-myristoyl glycine lipid modification. Positions 26-324 (FEYDKSLGST…AFPEIFYTFL (299 aa)) constitute a Protein kinase domain. Residues 32–40 (LGSTRFFKV) and Lys-53 each bind ATP. Asp-148 functions as the Proton acceptor in the catalytic mechanism. HEAT repeat units follow at residues 373 to 411 (NGLVILVSVITSCLQTLKYYDSKLAALELILHLAPRLGV), 413 to 450 (ILLDRITPYLLHFSNDSVPRVRAEALRTLTKVLALVKE), 458 to 495 (IYPEYILPGIAHLAQDDATIVRLAYAENIALLAETALR), 531 to 570 (QALHEMVQQKVVTLLSDPENIVKQTLMENGITRLCVFFGR), 572 to 610 (KANDVLLSHMITFLNDKNDWHLRGAFFDSIVGVAAYVGW), 612 to 648 (SSSILKPLLQQGLSDAEEFVIVKALYALTCMCQLGLL), and 690 to 726 (DVYCKLMPYLDPYITQPIIQIERKLVLLSVLKEPVSR). Ser-808, Ser-813, Ser-853, and Ser-865 each carry phosphoserine. The disordered stretch occupies residues 875–899 (LPKGSDQEVIQTGKPPRSESSAGIC). 6 WD repeats span residues 991–1030 (EHKSAVNRIRVSDEHSLFATCSNDGTVKIRNSQKMEGKTT), 1040–1079 (RVGGRVKTLTFCQGSHYLAIASDNGAVQLLGIEASKLPKS), 1093–1134 (KEDG…NAWT), 1139–1178 (LKSGLITSFAVDIHQCWLCIGTSSGTMACWDMRFQLPISS), 1182–1223 (PSRA…RRFT), and 1237–1278 (PSPH…RSYV). The segment at 1307-1326 (KQKVGPSDDTPRRGPESLPV) is disordered. Residues 1315–1326 (DTPRRGPESLPV) show a composition bias toward basic and acidic residues. Thr-1316 carries the post-translational modification Phosphothreonine. A WD 7 repeat occupies 1327–1358 (GHHDIITDVATFQTTQGFIVTASRDGIVKVWK).

Belongs to the protein kinase superfamily. Ser/Thr protein kinase family. In terms of assembly, component of the PI3K (PI3KC3/PI3K-III/class III phosphatidylinositol 3-kinase) complex the core of which is composed of the catalytic subunit PIK3C3, the regulatory subunit PIK3R4 and BECN1 associating with additional regulatory/auxiliary subunits to form alternative complex forms. Alternative complex forms containing a fourth regulatory subunit in a mutually exclusive manner are PI3K complex I (PI3KC3-C1) containing ATG14, and PI3K complex II (PI3KC3-C2) containing UVRAG. PI3KC3-C1 displays a V-shaped architecture with PIK3R4 serving as a bridge between PIK3C3 and the ATG14:BECN1 subcomplex. Both, PI3KC3-C1 and PI3KC3-C2, can associate with further regulatory subunits, such as RUBCN, SH3GLB1/Bif-1, AMBRA1 and NRBF2. PI3KC3-C1 probably associates with PIK3CB. Interacts with RAB7A in the presence of PIK3C3/VPS34. Interacts with NRBF2. Interacts with ARMC3. Mn(2+) serves as cofactor. Myristoylated. In terms of processing, probably autophosphorylated.

The protein resides in the late endosome. Its subcellular location is the cytoplasmic vesicle. It is found in the autophagosome. The protein localises to the membrane. It carries out the reaction L-seryl-[protein] + ATP = O-phospho-L-seryl-[protein] + ADP + H(+). The catalysed reaction is L-threonyl-[protein] + ATP = O-phospho-L-threonyl-[protein] + ADP + H(+). In terms of biological role, regulatory subunit of the PI3K complex that mediates formation of phosphatidylinositol 3-phosphate; different complex forms are believed to play a role in multiple membrane trafficking pathways: PI3KC3-C1 is involved in initiation of autophagosomes and PI3KC3-C2 in maturation of autophagosomes and endocytosis. Involved in regulation of degradative endocytic trafficking and cytokinesis, probably in the context of PI3KC3-C2. Regulatory subunit of the PI3K complex. May regulate membrane trafficking late in the endocytic pathway. The sequence is that of Phosphoinositide 3-kinase regulatory subunit 4 (PIK3R4) from Pongo abelii (Sumatran orangutan).